The sequence spans 227 residues: Probable 2-phosphosulfolactate phosphatase (227 aa).

This sequence belongs to the ComB family. Mg(2+) is required as a cofactor.

The enzyme catalyses (2R)-O-phospho-3-sulfolactate + H2O = (2R)-3-sulfolactate + phosphate. This chain is Probable 2-phosphosulfolactate phosphatase, found in Thermotoga petrophila (strain ATCC BAA-488 / DSM 13995 / JCM 10881 / RKU-1).